A 451-amino-acid chain; its full sequence is tRNA-2-methylthio-N(6)-dimethylallyladenosine synthase (451 aa).

The region spanning 3-120 is the MTTase N-terminal domain; it reads KKLFIQTHGC…LPEMVNAAGK (118 aa). The [4Fe-4S] cluster site is built by Cys-12, Cys-49, Cys-83, Cys-156, Cys-160, and Cys-163. The Radical SAM core domain occupies 142–374; sequence RVEGAEAFVS…QRRISQQAYD (233 aa). The TRAM domain occupies 377 to 441; the sequence is LSMVGEVQRI…PNSLLGELVG (65 aa).

The protein belongs to the methylthiotransferase family. MiaB subfamily. In terms of assembly, monomer. The cofactor is [4Fe-4S] cluster.

It localises to the cytoplasm. It catalyses the reaction N(6)-dimethylallyladenosine(37) in tRNA + (sulfur carrier)-SH + AH2 + 2 S-adenosyl-L-methionine = 2-methylsulfanyl-N(6)-dimethylallyladenosine(37) in tRNA + (sulfur carrier)-H + 5'-deoxyadenosine + L-methionine + A + S-adenosyl-L-homocysteine + 2 H(+). Its function is as follows. Catalyzes the methylthiolation of N6-(dimethylallyl)adenosine (i(6)A), leading to the formation of 2-methylthio-N6-(dimethylallyl)adenosine (ms(2)i(6)A) at position 37 in tRNAs that read codons beginning with uridine. The polypeptide is tRNA-2-methylthio-N(6)-dimethylallyladenosine synthase (Marinomonas sp. (strain MWYL1)).